Consider the following 313-residue polypeptide: Glutathione S-transferase omega-like 2 (313 aa).

The active-site Nucleophile is Cys49. Residues 161–289 form the GST C-terminal domain; it reads PSSLRTKIDE…TDFKHIKCHY (129 aa).

This sequence belongs to the GST superfamily. Omega family.

It is found in the cytoplasm. Its subcellular location is the nucleus. The protein resides in the golgi apparatus. The catalysed reaction is RX + glutathione = an S-substituted glutathione + a halide anion + H(+). It carries out the reaction L-dehydroascorbate + 2 glutathione = glutathione disulfide + L-ascorbate. In terms of biological role, active as '1-Cys' thiol transferase against beta-hydroxyethyl disulfide (HED), as dehydroascorbate reductase and as dimethylarsinic acid reductase, while not active against the standard GST substrate 1-chloro-2,4-dinitrobenzene (CDNB). May be involved in cell wall organization and biogenesis. In Schizosaccharomyces pombe (strain 972 / ATCC 24843) (Fission yeast), this protein is Glutathione S-transferase omega-like 2 (gto2).